The following is a 553-amino-acid chain: Transcription factor GAMYB (553 aa).

Basic and acidic residues predominate over residues 1 to 17 (MYRVKSESDCDMIHQEQ). Residues 1 to 45 (MYRVKSESDCDMIHQEQMDSPVADDGSSGGSPHRGGGPPLKKGPW) form a disordered region. The segment covering 27 to 38 (SSGGSPHRGGGP) has biased composition (gly residues). HTH myb-type domains are found at residues 37-89 (GPPL…ANHL) and 90-144 (RPNL…KRCQ). DNA-binding regions (H-T-H motif) lie at residues 65–89 (WNAV…ANHL) and 117–140 (WARM…NTRI). The disordered stretch occupies residues 464 to 489 (PAQSTSMGSGEQVMGPKYEPGDTSPH).

In terms of assembly, interacts with MYBS1. In terms of tissue distribution, expressed in aleurone cells, inflorescence shoot apical region, stamen primordia, and tapetum cells of the anther. Expressed at low level in roots and vegetative shoots.

The protein resides in the nucleus. Transcriptional activator of gibberellin-dependent alpha-amylase expression in aleurone cells. Involved in pollen and floral organs development. May bind to the 5'-TAACAAA-3' box of alpha-amylase promoter. Required for anther development. Functions in parallel with UDT1 to regulate early anther development. Functions upstream of the transcription factor TDR and may positively regulate its transcription. Required for pollen development. Probably required for controlling tapetal cell size and promoting tapetal programmed cell death (PCD) during anther development. Required for exine and Ubisch body formation in anthers. Interacts with the DNA specific motifs of giberrellin-up-regulated genes of anthers and regulates their expression. Positively regulates the expression of the laurate hydroxylase CYP703A3, known to be essential for the development of pollen exine and anther epicuticular layer. Functions with MYBS1 to integrate diverse nutrient starvation and gibberellin (GA) signaling pathways during germination of grains. Sugar, nitrogen and phosphate starvation signals converge and interconnect with GA to promote the co-nuclear import of GAMYB and MYBS1, resulting in the expression of a large set of GA-inducible hydrolases, transporters and regulators that are essential for mobilization of nutrient reserves in the endosperm to support seedling growth. This Oryza sativa subsp. japonica (Rice) protein is Transcription factor GAMYB.